An 829-amino-acid polypeptide reads, in one-letter code: Leucine--tRNA ligase (829 aa).

The 'HIGH' region motif lies at 40 to 50 (PYPSGNIHMGH). Residues 581-585 (KMSKS) carry the 'KMSKS' region motif. K584 lines the ATP pocket.

Belongs to the class-I aminoacyl-tRNA synthetase family.

It localises to the cytoplasm. The enzyme catalyses tRNA(Leu) + L-leucine + ATP = L-leucyl-tRNA(Leu) + AMP + diphosphate. The chain is Leucine--tRNA ligase from Nitratidesulfovibrio vulgaris (strain DP4) (Desulfovibrio vulgaris).